The chain runs to 98 residues: C-X-C motif chemokine 10 (98 aa).

The signal sequence occupies residues 1–21; sequence MNPSAAVVLCLVLLSLSGTQG. A Citrulline modification is found at Arg26. Intrachain disulfides connect Cys30–Cys57 and Cys32–Cys74.

Belongs to the intercrine alpha (chemokine CxC) family. As to quaternary structure, monomer, dimer, and tetramer. Interacts with CXCR3 (via N-terminus). As to expression, in the central nervous system, CXCL10 is predominantly localized to activated neurons. Expressed in both microglia and astrocytes.

It is found in the secreted. Its function is as follows. Pro-inflammatory cytokine that is involved in a wide variety of processes such as chemotaxis, differentiation, and activation of peripheral immune cells, regulation of cell growth, apoptosis and modulation of angiostatic effects. Plays thereby an important role during viral infections by stimulating the activation and migration of immune cells to the infected sites. Mechanistically, binding of CXCL10 to the CXCR3 receptor activates G protein-mediated signaling and results in downstream activation of phospholipase C-dependent pathway, an increase in intracellular calcium production and actin reorganization. In turn, recruitment of activated Th1 lymphocytes occurs at sites of inflammation. Activation of the CXCL10/CXCR3 axis also plays an important role in neurons in response to brain injury for activating microglia, the resident macrophage population of the central nervous system, and directing them to the lesion site. This recruitment is an essential element for neuronal reorganization. The polypeptide is C-X-C motif chemokine 10 (Cxcl10) (Rattus norvegicus (Rat)).